Consider the following 333-residue polypeptide: Nucleoid-associated protein APJL_0454 (333 aa).

This sequence belongs to the YejK family.

It localises to the cytoplasm. The protein localises to the nucleoid. This chain is Nucleoid-associated protein APJL_0454, found in Actinobacillus pleuropneumoniae serotype 3 (strain JL03).